A 723-amino-acid chain; its full sequence is Envelope glycoprotein H (723 aa).

Positions 1–23 (MSPATRFTVISCLVVSLITPSET) are cleaved as a signal peptide. The Virion surface portion of the chain corresponds to 24–700 (SSWFDPFIEW…IIDIRQTSIF (677 aa)). 4 N-linked (GlcNAc...) asparagine; by host glycosylation sites follow: Asn39, Asn45, Asn144, and Asn174. An interaction with gL region spans residues 197 to 263 (HQFAIVLTFT…QSYRDDLLIV (67 aa)). N-linked (GlcNAc...) asparagine; by host glycans are attached at residues Asn270, Asn340, Asn411, Asn543, Asn621, and Asn681. Residues 701–721 (MIMLYCSLGVLLLYGLYRLLH) traverse the membrane as a helical segment. At 722-723 (MI) the chain is on the intravirion side.

This sequence belongs to the herpesviridae glycoprotein H family. Interacts with glycoprotein L (gL); this interaction is necessary for the correct processing and cell surface expression of gH. The heterodimer gH/gL seems to interact with gB trimers during fusion. In terms of processing, N-glycosylated, O-glycosylated, and sialylated.

Its subcellular location is the virion membrane. The protein localises to the host cell membrane. It localises to the host endosome membrane. In terms of biological role, the heterodimer glycoprotein H-glycoprotein L is required for the fusion of viral and plasma membranes leading to virus entry into the host cell. Following initial binding to host receptor, membrane fusion is mediated by the fusion machinery composed of gB and the heterodimer gH/gL. May also be involved in the fusion between the virion envelope and the outer nuclear membrane during virion morphogenesis. The polypeptide is Envelope glycoprotein H (Guinea pig cytomegalovirus (strain 22122) (GPCMV)).